Reading from the N-terminus, the 440-residue chain is 3-phosphoshikimate 1-carboxyvinyltransferase (440 aa).

Residues Lys19, Ser20, and Arg24 each coordinate 3-phosphoshikimate. Lys19 contributes to the phosphoenolpyruvate binding site. Residues Gly92 and Arg121 each contribute to the phosphoenolpyruvate site. The 3-phosphoshikimate site is built by Ser166, Gln168, Asp315, and Lys342. Gln168 contributes to the phosphoenolpyruvate binding site. Asp315 (proton acceptor) is an active-site residue. Phosphoenolpyruvate-binding residues include Arg346 and Arg399.

The protein belongs to the EPSP synthase family. As to quaternary structure, monomer.

It localises to the cytoplasm. The catalysed reaction is 3-phosphoshikimate + phosphoenolpyruvate = 5-O-(1-carboxyvinyl)-3-phosphoshikimate + phosphate. The protein operates within metabolic intermediate biosynthesis; chorismate biosynthesis; chorismate from D-erythrose 4-phosphate and phosphoenolpyruvate: step 6/7. In terms of biological role, catalyzes the transfer of the enolpyruvyl moiety of phosphoenolpyruvate (PEP) to the 5-hydroxyl of shikimate-3-phosphate (S3P) to produce enolpyruvyl shikimate-3-phosphate and inorganic phosphate. This Leptospira interrogans serogroup Icterohaemorrhagiae serovar Lai (strain 56601) protein is 3-phosphoshikimate 1-carboxyvinyltransferase.